A 291-amino-acid polypeptide reads, in one-letter code: Small ribosomal subunit biogenesis GTPase RsgA (291 aa).

One can recognise a CP-type G domain in the interval 63–221; sequence QNELKRPPVS…VADTPGFSAL (159 aa). Residues 112–115 and 164–172 each bind GTP; these read TKKD and GQSGVGKST. Cysteine 245, cysteine 250, histidine 252, and cysteine 258 together coordinate Zn(2+).

Belongs to the TRAFAC class YlqF/YawG GTPase family. RsgA subfamily. Monomer. Associates with 30S ribosomal subunit, binds 16S rRNA. Requires Zn(2+) as cofactor.

The protein localises to the cytoplasm. In terms of biological role, one of several proteins that assist in the late maturation steps of the functional core of the 30S ribosomal subunit. Helps release RbfA from mature subunits. May play a role in the assembly of ribosomal proteins into the subunit. Circularly permuted GTPase that catalyzes slow GTP hydrolysis, GTPase activity is stimulated by the 30S ribosomal subunit. The polypeptide is Small ribosomal subunit biogenesis GTPase RsgA (Staphylococcus carnosus (strain TM300)).